The sequence spans 316 residues: Taste receptor type 2 member 3 (316 aa).

Residues 1-7 lie on the Extracellular side of the membrane; that stretch reads MFGFIEG. The chain crosses the membrane as a helical span at residues 8–28; it reads VFLVLTITEFILGNLVNGFIV. At 29 to 50 the chain is on the cytoplasmic side; sequence SINSSYWFKSKKISLSNFIITS. The chain crosses the membrane as a helical span at residues 51-71; it reads LALFRIFLLWIIFIDSLIIVF. Over 72–86 the chain is Extracellular; that stretch reads SYQTHDSGIMMQLID. A helical transmembrane segment spans residues 87–107; sequence VFWTFTNHFSIWLISCLSVFY. At 108–128 the chain is on the cytoplasmic side; it reads CLKIASFSHPSFLWLKWRASR. The chain crosses the membrane as a helical span at residues 129–149; sequence VVVGMLWGALLLSCVSTMSLM. Over 150–186 the chain is Extracellular; the sequence is NEFKIYSALTRSKDTPNMTEYIRLKRQEYNLMHVLGN. N-linked (GlcNAc...) asparagine glycosylation is present at Asn-166. The chain crosses the membrane as a helical span at residues 187-207; the sequence is LWKIPSLIVSLVAYLLLLLSL. Topologically, residues 208–234 are cytoplasmic; it reads GKHTQQMQQYSIDSRDQSAEAHKRAMR. A helical membrane pass occupies residues 235 to 255; that stretch reads IISSFLLFFLFYFLSFMILSS. Residues 256–266 lie on the Extracellular side of the membrane; the sequence is SRFLPETRIAR. Residues 267 to 287 traverse the membrane as a helical segment; that stretch reads IIGVVISMSYLVGDSFILIVC. The Cytoplasmic portion of the chain corresponds to 288 to 316; that stretch reads NNKLKHTFVAMLPCECGHLKPGSKGPSAS.

Belongs to the G-protein coupled receptor T2R family.

The protein resides in the membrane. Its function is as follows. Gustducin-coupled receptor implicated in the perception of bitter compounds in the oral cavity and the gastrointestinal tract. Signals through PLCB2 and the calcium-regulated cation channel TRPM5. The chain is Taste receptor type 2 member 3 (Tas2r3) from Mus musculus (Mouse).